We begin with the raw amino-acid sequence, 424 residues long: UDP-N-acetylglucosamine 1-carboxyvinyltransferase (424 aa).

Lysine 22–asparagine 23 contributes to the phosphoenolpyruvate binding site. A UDP-N-acetyl-alpha-D-glucosamine-binding site is contributed by arginine 93. Cysteine 117 acts as the Proton donor in catalysis. A 2-(S-cysteinyl)pyruvic acid O-phosphothioketal modification is found at cysteine 117. UDP-N-acetyl-alpha-D-glucosamine-binding positions include lysine 162–valine 165, aspartate 307, and isoleucine 329.

This sequence belongs to the EPSP synthase family. MurA subfamily.

It is found in the cytoplasm. The enzyme catalyses phosphoenolpyruvate + UDP-N-acetyl-alpha-D-glucosamine = UDP-N-acetyl-3-O-(1-carboxyvinyl)-alpha-D-glucosamine + phosphate. The protein operates within cell wall biogenesis; peptidoglycan biosynthesis. Its function is as follows. Cell wall formation. Adds enolpyruvyl to UDP-N-acetylglucosamine. This is UDP-N-acetylglucosamine 1-carboxyvinyltransferase from Actinobacillus pleuropneumoniae serotype 5b (strain L20).